The primary structure comprises 422 residues: Histone deacetylase B (422 aa).

Asp102 contacts substrate. His144 serves as the catalytic Proton acceptor. A substrate-binding site is contributed by Gly152. Asp179, His181, and Asp268 together coordinate a divalent metal cation. Tyr307 is a binding site for substrate. Positions 399-422 (IDFDRDEDSKENMDKRKKKHNDFS) are disordered. Basic residues predominate over residues 413 to 422 (KRKKKHNDFS).

This sequence belongs to the histone deacetylase family. HD type 1 subfamily.

It is found in the nucleus. Its subcellular location is the cytoplasm. It carries out the reaction N(6)-acetyl-L-lysyl-[histone] + H2O = L-lysyl-[histone] + acetate. Its activity is regulated as follows. Its activity is inhibited by trichostatin A (TSA), a well known histone deacetylase inhibitor. Cytosolic activity is refractory to inhibition by TSA, while the nuclear activity is inhibited completely. In terms of biological role, responsible for the deacetylation of lysine residues on the N-terminal part of the core histones (H2A, H2B, H3 and H4). Histone deacetylation plays an important role in transcriptional regulation, cell cycle progression and developmental events. Histone deacetylases act via the formation of large multiprotein complexes. May play a role in the regulation of the timing of gene expression during the development and in the definition aspects of the phenotype that mediate social behavior in genetically heterogeneous groups. This is Histone deacetylase B (hdaB) from Dictyostelium discoideum (Social amoeba).